Here is a 130-residue protein sequence, read N- to C-terminus: Calcitonin gene-related peptide 2 (130 aa).

The first 26 residues, 1–26 (MDFWKFFPFLALSTIWVLCLASSLQA), serve as a signal peptide directing secretion. The propeptide occupies 27-82 (APFRSALESSLDLGTLGDQEKHLLLAALMQDYEQMKARKLEQEEQETKGSRVTAQK). An intrachain disulfide couples Cys85 to Cys90. Phe120 carries the phenylalanine amide modification. The propeptide occupies 127–130 (DLQA).

It belongs to the calcitonin family. Detected in nerve cells of cerebrum, hippocampus and pons/midbrain in newborns, and only in nerve cells of pons/midbrain in adult.

The protein resides in the secreted. Its function is as follows. CALCB/CGRP2 is a peptide hormone that induces vasodilation mediated by the CALCRL-RAMP1 receptor complex. Dilates a variety of vessels including the coronary, cerebral and systemic vasculature. Its abundance in the CNS also points toward a neurotransmitter or neuromodulator role. The polypeptide is Calcitonin gene-related peptide 2 (Mus musculus (Mouse)).